The following is a 126-amino-acid chain: Phosphoribosyl-AMP cyclohydrolase (126 aa).

Aspartate 74 lines the Mg(2+) pocket. Cysteine 75 contributes to the Zn(2+) binding site. 2 residues coordinate Mg(2+): aspartate 76 and aspartate 78. The Zn(2+) site is built by cysteine 92 and cysteine 99.

This sequence belongs to the PRA-CH family. Homodimer. Mg(2+) serves as cofactor. The cofactor is Zn(2+).

The protein resides in the cytoplasm. The enzyme catalyses 1-(5-phospho-beta-D-ribosyl)-5'-AMP + H2O = 1-(5-phospho-beta-D-ribosyl)-5-[(5-phospho-beta-D-ribosylamino)methylideneamino]imidazole-4-carboxamide. It participates in amino-acid biosynthesis; L-histidine biosynthesis; L-histidine from 5-phospho-alpha-D-ribose 1-diphosphate: step 3/9. Catalyzes the hydrolysis of the adenine ring of phosphoribosyl-AMP. In Geotalea daltonii (strain DSM 22248 / JCM 15807 / FRC-32) (Geobacter daltonii), this protein is Phosphoribosyl-AMP cyclohydrolase.